The following is a 126-amino-acid chain: Probable flagellum biosynthesis repressor protein FlbT (126 aa).

This sequence belongs to the FlbT family.

In terms of biological role, has a post-transcriptional repressor function in flagellum biogenesis. Associates with the 5'-UTR of fljK mRNA and promotes its degradation. The protein is Probable flagellum biosynthesis repressor protein FlbT of Rhodopseudomonas palustris (strain ATCC BAA-98 / CGA009).